A 449-amino-acid chain; its full sequence is Glycoprotein endo-alpha-1,2-mannosidase (449 aa).

At 1–8 (MIRFRRRT) the chain is on the cytoplasmic side. The helical; Signal-anchor for type II membrane protein transmembrane segment at 9-29 (CITLSIFIFLVCLIMAGLKHL) threads the bilayer. Over 30 to 449 (RPENAAFGSP…YMKEKEHWLV (420 aa)) the chain is Lumenal. The tract at residues 59 to 449 (DSENHLKGNT…YMKEKEHWLV (391 aa)) is catalytic.

Belongs to the glycosyl hydrolase 99 family.

The protein localises to the golgi apparatus membrane. The enzyme catalyses N-{alpha-Glc-(1-&gt;3)-alpha-Man-(1-&gt;2)-alpha-Man-(1-&gt;2)-alpha-Man-(1-&gt;3)-[alpha-Man-(1-&gt;2)-alpha-Man-(1-&gt;3)-[alpha-Man-(1-&gt;2)-alpha-Man-(1-&gt;6)]-alpha-Man-(1-&gt;6)]-beta-Man-(1-&gt;4)-beta-GlcNAc-(1-&gt;4)-beta-GlcNAc}-L-asparaginyl-[protein] + H2O = alpha-D-glucosyl-(1-&gt;3)-D-mannopyranose + N(4)-{alpha-D-Man-(1-&gt;2)-alpha-D-Man-(1-&gt;3)-[alpha-D-Man-(1-&gt;2)-alpha-D-Man-(1-&gt;3)-[alpha-D-Man-(1-&gt;2)-alpha-D-Man-(1-&gt;6)]-alpha-D-Man-(1-&gt;6)]-beta-D-Man-(1-&gt;4)-beta-D-GlaNAc-(1-&gt;4)-beta-D-GlcNAc}-L-asparaginyl-[protein] (N-glucan mannose isomer 8A1,2,3B1,2). The polypeptide is Glycoprotein endo-alpha-1,2-mannosidase (manea) (Xenopus laevis (African clawed frog)).